Consider the following 260-residue polypeptide: 3-alpha-(or 20-beta)-hydroxysteroid dehydrogenase (260 aa).

The NAD(+) site is built by Arg-17, Met-19, Asp-38, Asp-61, Val-62, Asn-88, Tyr-153, Lys-157, Val-186, Thr-188, and Thr-191. The active-site Proton acceptor is Tyr-153.

This sequence belongs to the short-chain dehydrogenases/reductases (SDR) family. In terms of assembly, homotetramer.

The catalysed reaction is androstan-3alpha,17beta-diol + NAD(+) = 17beta-hydroxyandrostanone + NADH + H(+). The protein operates within lipid metabolism; steroid degradation. Its function is as follows. Probably involved in steroid metabolism. This Mycobacterium tuberculosis (strain CDC 1551 / Oshkosh) protein is 3-alpha-(or 20-beta)-hydroxysteroid dehydrogenase (fabG3).